A 186-amino-acid polypeptide reads, in one-letter code: MDTFSTKSLALQAQKKLLSKMASRAVASAFIDDTSSEVLDELYRATKEFTRSRKEAQKLVKNLVKVAVKLGVLLRAGQLGAEELARLQRLRQQARRLAMTAVSFHQVDFTFDRRVLATTLLECRDLLHQAAGAHLTAKSHGRINHVFGHLADCDFLAALYSPAEPYRSHLRRICDGLTRMLDEDSI.

Belongs to the TNFAIP8 family. Interacts with FBXW5; TNFAIP8L1 competes with TSC2 to bind FBXW5 increasing TSC2 stability by preventing its ubiquitination.

The protein localises to the cytoplasm. In terms of biological role, acts as a negative regulator of mTOR activity. This chain is Tumor necrosis factor alpha-induced protein 8-like protein 1 (TNFAIP8L1), found in Bos taurus (Bovine).